A 250-amino-acid polypeptide reads, in one-letter code: Probable aquaporin TIP1-1 (250 aa).

The next 2 helical transmembrane spans lie at 25 to 44 (AEFI…GMAF) and 58 to 77 (LIAA…SVGA). An NPA 1 motif is present at residues 85-87 (NPA). 3 consecutive transmembrane segments (helical) span residues 103 to 121 (GLLY…CFLL), 144 to 163 (LVLE…ATAV), and 170 to 192 (LGTI…GGAF). An NPA 2 motif is present at residues 198-200 (NPA). A helical membrane pass occupies residues 216–233 (WVYWVGPLIGGGLAGVIY).

This sequence belongs to the MIP/aquaporin (TC 1.A.8) family. TIP (TC 1.A.8.10) subfamily. Expressed in roots and leaves.

The protein resides in the vacuole membrane. Its function is as follows. Aquaporins facilitate the transport of water and small neutral solutes across cell membranes. May be involved in transport from the vacuolar compartment to the cytoplasm. The chain is Probable aquaporin TIP1-1 (TIP1-1) from Oryza sativa subsp. japonica (Rice).